The following is a 167-amino-acid chain: ATP synthase subunit b (167 aa).

The chain crosses the membrane as a helical span at residues 7-25; sequence SFLLAVSFVIFIYLIYRPA.

The protein belongs to the ATPase B chain family. F-type ATPases have 2 components, F(1) - the catalytic core - and F(0) - the membrane proton channel. F(1) has five subunits: alpha(3), beta(3), gamma(1), delta(1), epsilon(1). F(0) has three main subunits: a(1), b(2) and c(10-14). The alpha and beta chains form an alternating ring which encloses part of the gamma chain. F(1) is attached to F(0) by a central stalk formed by the gamma and epsilon chains, while a peripheral stalk is formed by the delta and b chains.

It localises to the cell inner membrane. In terms of biological role, f(1)F(0) ATP synthase produces ATP from ADP in the presence of a proton or sodium gradient. F-type ATPases consist of two structural domains, F(1) containing the extramembraneous catalytic core and F(0) containing the membrane proton channel, linked together by a central stalk and a peripheral stalk. During catalysis, ATP synthesis in the catalytic domain of F(1) is coupled via a rotary mechanism of the central stalk subunits to proton translocation. Its function is as follows. Component of the F(0) channel, it forms part of the peripheral stalk, linking F(1) to F(0). In Rickettsia typhi (strain ATCC VR-144 / Wilmington), this protein is ATP synthase subunit b.